A 1255-amino-acid chain; its full sequence is Period circadian protein homolog 2 (1255 aa).

The segment at 1–79 (MNGYAEFPPS…EPPDARQSPD (79 aa)) is disordered. The span at 35–56 (SSGSSGHETNENCSTGRDSQGS) shows a compositional bias: polar residues. Residues 111–120 (LIKTLKELKV) carry the Nuclear export signal 1 motif. One can recognise a PAS 1 domain in the interval 181 to 248 (VTSEHIVKNA…FHSFTSPYKL (68 aa)). The short motif at 308–312 (LCCLL) is the LXXLL element. The region spanning 321–387 (YEAPRIPPEK…MLAIHKKILQ (67 aa)) is the PAS 2 domain. A PAC domain is found at 395–438 (YSPIRFRARNGEYITLDTSWSSFINPWSRKISFIIGRHKVRVGP). Residues 462-471 (LTEQIHRLLL) carry the Nuclear export signal 2 motif. Disordered stretches follow at residues 473-557 (PVPH…AVPA) and 617-646 (RSSD…SRTG). The segment at 480–484 (SGYGS) is important for protein stability. A compositionally biased stretch (basic and acidic residues) spans 504-516 (NGHEDSRRRRAEI). The CSNK1E binding domain stretch occupies residues 512–717 (RRAEICKNGN…ALACGLSQEK (206 aa)). Residues Ser527, Ser530, Ser533, and Ser540 each carry the phosphoserine modification. A compositionally biased stretch (basic and acidic residues) spans 529-541 (YSHESGEQKKKSV). Phosphoserine occurs at positions 662, 696, 700, 714, 766, and 771. Disordered regions lie at residues 764–838 (ERSK…DTSQ) and 931–985 (FPSH…QSRS). The Nuclear localization signal motif lies at 789 to 805 (KKTGKNRKLKSKRVKPR). A compositionally biased stretch (basic residues) spans 790 to 803 (KTGKNRKLKSKRVK). Composition is skewed to polar residues over residues 829–838 (TAWSPSDTSQ) and 936–956 (TLTS…TSIP). Residues 888–1071 (QFAVQPPPFP…NEDLCSASGS (184 aa)) form an interaction with PPARG region. Ser945 carries the post-translational modification Phosphoserine. The segment covering 959-972 (PCACPATRATPPSA) has biased composition (low complexity). Phosphoserine is present on Ser977. The Nuclear export signal 3 motif lies at 989 to 996 (LQLNLLQL). The tract at residues 1018-1050 (VGADCKPGTSRDQQPKAPLTRDEPSDTQNSDAL) is disordered. The short motif at 1057–1061 (LNLLL) is the LXXLL element. The segment at 1077-1106 (LGSGSLGCDASPSGAGSSDTSHTSKYFGSI) is disordered. Over residues 1090–1106 (GAGSSDTSHTSKYFGSI) the composition is skewed to polar residues. Ser1124 carries the phosphoserine modification. The interval 1155 to 1255 (SRNLEAVLKE…PLNHRIEEQT (101 aa)) is CRY binding domain. Residues 1231–1255 (GLSEVSDTKEDENGSPLNHRIEEQT) form a disordered region.

In terms of assembly, homodimer. Component of the circadian core oscillator, which includes the CRY proteins, CLOCK or NPAS2, BMAL1 or BMAL2, CSNK1D and/or CSNK1E, TIMELESS, and the PER proteins. Interacts with CLOCK-BMAL1 (off DNA). Interacts with BMAL2. Interacts directly with PER1 and PER3, and through a C-terminal domain, with CRY1 and CRY2. Interacts (via PAS 2 domain) with TIMELESS. Interacts with NFIL3. Different large complexes have been identified with different repressive functions. The core of PER complexes is composed of at least PER1, PER2, PER3, CRY1, CRY2, CSNK1D and/or CSNK1E. The large PER complex involved in the repression of transcriptional termination is composed of at least PER2, CDK9, DDX5, DHX9, NCBP1 and POLR2A (active). The large PER complex involved in the histone deacetylation is composed of at least HDAC1, PER2, SFPQ and SIN3A. The large PER complex involved in the histone methylation is composed of at least PER2, CBX3, TRIM28, SUV39H1 and/or SUV39H2; CBX3 mediates the formation of the complex. Interacts with SETX; the interaction inhibits termination of circadian target genes. Interacts with the nuclear receptors HNF4A, NR1D1, NR4A2, RORA, PPARA, PPARG and THRA; the interaction with at least PPARG is ligand dependent. Interacts with PML. Interacts (phosphorylated) with BTRC and FBXW11; the interactions trigger proteasomal degradation. Interacts with NONO and SFPQ. Interacts with CAVIN3. Interacts with MAGEL2. Interacts with MAP1LC3B. Interacts with HNF4A. Acetylated. Deacetylated by SIRT1, resulting in decreased protein stability. Deacetylated by SIRT6, preventing its degradation by the proteasome, resulting in increased protein stability. Post-translationally, phosphorylated by CSNK1E and CSNK1D. Phosphorylation results in PER2 protein degradation. May be dephosphorylated by PP1. In terms of processing, ubiquitinated, leading to its proteasomal degradation. Ubiquitination may be inhibited by CRY1. In terms of tissue distribution, widely expressed. Found in heart, brain, placenta, lung, liver, skeleatal muscle, kidney and pancreas. High levels in skeletal muscle and pancreas. Low levels in lung. Isoform 2 is expressed in keratinocytes (at protein level).

The protein resides in the nucleus. The protein localises to the cytoplasm. It is found in the perinuclear region. It localises to the nucleolus. Transcriptional repressor which forms a core component of the circadian clock. The circadian clock, an internal time-keeping system, regulates various physiological processes through the generation of approximately 24 hour circadian rhythms in gene expression, which are translated into rhythms in metabolism and behavior. It is derived from the Latin roots 'circa' (about) and 'diem' (day) and acts as an important regulator of a wide array of physiological functions including metabolism, sleep, body temperature, blood pressure, endocrine, immune, cardiovascular, and renal function. Consists of two major components: the central clock, residing in the suprachiasmatic nucleus (SCN) of the brain, and the peripheral clocks that are present in nearly every tissue and organ system. Both the central and peripheral clocks can be reset by environmental cues, also known as Zeitgebers (German for 'timegivers'). The predominant Zeitgeber for the central clock is light, which is sensed by retina and signals directly to the SCN. The central clock entrains the peripheral clocks through neuronal and hormonal signals, body temperature and feeding-related cues, aligning all clocks with the external light/dark cycle. Circadian rhythms allow an organism to achieve temporal homeostasis with its environment at the molecular level by regulating gene expression to create a peak of protein expression once every 24 hours to control when a particular physiological process is most active with respect to the solar day. Transcription and translation of core clock components (CLOCK, NPAS2, BMAL1, BMAL2, PER1, PER2, PER3, CRY1 and CRY2) plays a critical role in rhythm generation, whereas delays imposed by post-translational modifications (PTMs) are important for determining the period (tau) of the rhythms (tau refers to the period of a rhythm and is the length, in time, of one complete cycle). A diurnal rhythm is synchronized with the day/night cycle, while the ultradian and infradian rhythms have a period shorter and longer than 24 hours, respectively. Disruptions in the circadian rhythms contribute to the pathology of cardiovascular diseases, cancer, metabolic syndrome and aging. A transcription/translation feedback loop (TTFL) forms the core of the molecular circadian clock mechanism. Transcription factors, CLOCK or NPAS2 and BMAL1 or BMAL2, form the positive limb of the feedback loop, act in the form of a heterodimer and activate the transcription of core clock genes and clock-controlled genes (involved in key metabolic processes), harboring E-box elements (5'-CACGTG-3') within their promoters. The core clock genes: PER1/2/3 and CRY1/2 which are transcriptional repressors form the negative limb of the feedback loop and interact with the CLOCK|NPAS2-BMAL1|BMAL2 heterodimer inhibiting its activity and thereby negatively regulating their own expression. This heterodimer also activates nuclear receptors NR1D1/2 and RORA/B/G, which form a second feedback loop and which activate and repress BMAL1 transcription, respectively. PER1 and PER2 proteins transport CRY1 and CRY2 into the nucleus with appropriate circadian timing, but also contribute directly to repression of clock-controlled target genes through interaction with several classes of RNA-binding proteins, helicases and others transcriptional repressors. PER appears to regulate circadian control of transcription by at least three different modes. First, interacts directly with the CLOCK-BMAL1 at the tail end of the nascent transcript peak to recruit complexes containing the SIN3-HDAC that remodel chromatin to repress transcription. Second, brings H3K9 methyltransferases such as SUV39H1 and SUV39H2 to the E-box elements of the circadian target genes, like PER2 itself or PER1. The recruitment of each repressive modifier to the DNA seems to be very precisely temporally orchestrated by the large PER complex, the deacetylases acting before than the methyltransferases. Additionally, large PER complexes are also recruited to the target genes 3' termination site through interactions with RNA-binding proteins and helicases that may play a role in transcription termination to regulate transcription independently of CLOCK-BMAL1 interactions. Recruitment of large PER complexes to the elongating polymerase at PER and CRY termination sites inhibited SETX action, impeding RNA polymerase II release and thereby repressing transcriptional reinitiation. May propagate clock information to metabolic pathways via the interaction with nuclear receptors. Coactivator of PPARA and corepressor of NR1D1, binds rhythmically at the promoter of nuclear receptors target genes like BMAL1 or G6PC1. Directly and specifically represses PPARG proadipogenic activity by blocking PPARG recruitment to target promoters and thereby inhibiting transcriptional activation. Required for fatty acid and lipid metabolism, is involved as well in the regulation of circulating insulin levels. Plays an important role in the maintenance of cardiovascular functions through the regulation of NO and vasodilatatory prostaglandins production in aortas. Controls circadian glutamate uptake in synaptic vesicles through the regulation of VGLUT1 expression. May also be involved in the regulation of inflammatory processes. Represses the CLOCK-BMAL1 induced transcription of BHLHE40/DEC1 and ATF4. Negatively regulates the formation of the TIMELESS-CRY1 complex by competing with TIMELESS for binding to CRY1. In Homo sapiens (Human), this protein is Period circadian protein homolog 2 (PER2).